A 209-amino-acid chain; its full sequence is COP9 signalosome complex subunit 8 (209 aa).

The PCI domain maps to 8-179 (DNAFSFRKLL…GALDVSLNRF (172 aa)). S175 is subject to Phosphoserine.

Belongs to the CSN8 family. As to quaternary structure, component of the CSN complex, composed of COPS1/GPS1, COPS2, COPS3, COPS4, COPS5, COPS6, COPS7 (COPS7A or COPS7B), COPS8 and COPS9. In the complex, it probably interacts directly with COPS3, COPS4 and COPS7 (COPS7A or COPS7B).

The protein resides in the cytoplasm. It is found in the nucleus. Its function is as follows. Component of the COP9 signalosome complex (CSN), a complex involved in various cellular and developmental processes. The CSN complex is an essential regulator of the ubiquitin (Ubl) conjugation pathway by mediating the deneddylation of the cullin subunits of SCF-type E3 ligase complexes, leading to decrease the Ubl ligase activity of SCF-type complexes such as SCF, CSA or DDB2. The complex is also involved in phosphorylation of p53/TP53, c-jun/JUN, IkappaBalpha/NFKBIA, ITPK1 and IRF8/ICSBP, possibly via its association with CK2 and PKD kinases. CSN-dependent phosphorylation of TP53 and JUN promotes and protects degradation by the Ubl system, respectively. This chain is COP9 signalosome complex subunit 8 (Cops8), found in Rattus norvegicus (Rat).